Reading from the N-terminus, the 378-residue chain is Poly(3-hydroxyalkanoate) polymerase subunit PhaC (378 aa).

One can recognise an AB hydrolase-1 domain in the interval 84-356 (PVLIVYALVN…QSFPVGHIGM (273 aa)).

The protein belongs to the PHA/PHB synthase family. Type III PhaC subfamily. Forms a heterodimer with PhaE, which may multimerize in the presence of 3-hydroxybutyryl-CoA. Both subunits are required for PHB synthesis in E.coli and in PHA-negative A.eutrophus.

It localises to the cytoplasm. It catalyses the reaction (3R)-3-hydroxybutanoyl-CoA + [(3R)-hydroxybutanoate](n) = [(3R)-hydroxybutanoate](n+1) + CoA. Its pathway is biopolymer metabolism; poly-(R)-3-hydroxybutanoate biosynthesis. In terms of biological role, when expressed in E.coli with Synechocystis PhaE and C.necator PhaA and PhaB, confers the ability to synthesize up to 13% (w/w) poly(3-hydroxybutyrate) (PHB) depending on the carbon source; all 4 genes are necessary for PHB production. Cell-free in vitro coexpression with PhaE gives a heterodimer able to polymerize 3-hydroxybutyrate-CoA. The polypeptide is Poly(3-hydroxyalkanoate) polymerase subunit PhaC (Synechocystis sp. (strain ATCC 27184 / PCC 6803 / Kazusa)).